The chain runs to 979 residues: Glycine dehydrogenase (decarboxylating) (979 aa).

The residue at position 726 (Lys726) is an N6-(pyridoxal phosphate)lysine.

The protein belongs to the GcvP family. In terms of assembly, the glycine cleavage system is composed of four proteins: P, T, L and H. Requires pyridoxal 5'-phosphate as cofactor.

It catalyses the reaction N(6)-[(R)-lipoyl]-L-lysyl-[glycine-cleavage complex H protein] + glycine + H(+) = N(6)-[(R)-S(8)-aminomethyldihydrolipoyl]-L-lysyl-[glycine-cleavage complex H protein] + CO2. In terms of biological role, the glycine cleavage system catalyzes the degradation of glycine. The P protein binds the alpha-amino group of glycine through its pyridoxal phosphate cofactor; CO(2) is released and the remaining methylamine moiety is then transferred to the lipoamide cofactor of the H protein. This Ralstonia pickettii (strain 12J) protein is Glycine dehydrogenase (decarboxylating).